Consider the following 370-residue polypeptide: (5-formylfuran-3-yl)methyl phosphate transaminase (370 aa).

The residue at position 222 (Lys222) is an N6-(pyridoxal phosphate)lysine.

It belongs to the class-I pyridoxal-phosphate-dependent aminotransferase family. Homodimer. Pyridoxal 5'-phosphate is required as a cofactor.

It is found in the cytoplasm. It catalyses the reaction 4-(hydroxymethyl)-2-furancarboxaldehyde phosphate + L-alanine = [5-(aminomethyl)-3-furyl]methyl phosphate + pyruvate. It participates in cofactor biosynthesis; methanofuran biosynthesis. Functionally, catalyzes the transamination reaction between 4-(hydroxymethyl)-2-furancarboxaldehyde phosphate (4-HFC-P) and alanine to produce pyruvate and 5-(aminomethyl)-3-furanmethanol phosphate (F1-P), the precursor for the furan moiety in methanofuran. In Methanocaldococcus jannaschii (strain ATCC 43067 / DSM 2661 / JAL-1 / JCM 10045 / NBRC 100440) (Methanococcus jannaschii), this protein is (5-formylfuran-3-yl)methyl phosphate transaminase.